We begin with the raw amino-acid sequence, 540 residues long: MRLDTNSNVDFKAFESSSSSCPVKLDNLATWGGSQKTDTRLPITDYSNLGGPRHNRSPFPLCKDVNNRFVIWDGDMTTLEVDAITNTSDETLTESNSISERIFAVAGNQLREELSTTVKECRTGDVRITRGYNLPAKYVLHTVAPAYREKFKTAAENTLHCCYRNVLCKAKELNLHTIALCNISAHQKSFPADVAAHIALRTIRRYLDKCTLQVVILCVGSSERGTYEVLAPLYFPRDQLEERSALWQLPKDIGGEFGEPQHPDPDRQIRIIRNPQHSVHMRHHLADDDSDVSPHDMEGNSSDLEYGARDMNGLSLNSYSSGLQAQLQRDLDRQHLLSDRPRTGVYENVISEGVEGIEHQERYERLLRRAQVEDLTEVSGIGCLYQSGVDRLGRPVIVFCGKWFPAQNIDLEKALLYLIKLLDPIVKGDYVISYFHTLTSTNNYPSLHWLREVYSVLPYKYKKNLKAFYIVHPTFWTKMMTWWFTTFMAPAIKAKVHSLPGVEHLYSAITKDQLEIPAYITEYDMATNGLHYFNPVPTAS.

In terms of domain architecture, Macro spans 56 to 235 (RSPFPLCKDV…TYEVLAPLYF (180 aa)). Residues 371-528 (QVEDLTEVSG…YITEYDMATN (158 aa)) enclose the CRAL-TRIO domain.

Belongs to the GDAP2 family.

The polypeptide is Protein GDAP2 homolog (Drosophila melanogaster (Fruit fly)).